A 361-amino-acid polypeptide reads, in one-letter code: S-adenosylmethionine decarboxylase proenzyme (361 aa).

Catalysis depends on residues Glu-11 and Glu-14. Residue Ser-71 is the Schiff-base intermediate with substrate; via pyruvic acid of the active site. Ser-71 carries the pyruvic acid (Ser); by autocatalysis modification. Cys-85 acts as the Proton donor; for catalytic activity in catalysis. Residues Ser-234 and His-247 each act as proton acceptor; for processing activity in the active site.

The protein belongs to the eukaryotic AdoMetDC family. The cofactor is pyruvate. Post-translationally, is synthesized initially as an inactive proenzyme. Formation of the active enzyme involves a self-maturation process in which the active site pyruvoyl group is generated from an internal serine residue via an autocatalytic post-translational modification. Two non-identical subunits are generated from the proenzyme in this reaction, and the pyruvate is formed at the N-terminus of the alpha chain, which is derived from the carboxyl end of the proenzyme. The post-translation cleavage follows an unusual pathway, termed non-hydrolytic serinolysis, in which the side chain hydroxyl group of the serine supplies its oxygen atom to form the C-terminus of the beta chain, while the remainder of the serine residue undergoes an oxidative deamination to produce ammonia and the pyruvoyl group blocking the N-terminus of the alpha chain.

It carries out the reaction S-adenosyl-L-methionine + H(+) = S-adenosyl 3-(methylsulfanyl)propylamine + CO2. It functions in the pathway amine and polyamine biosynthesis; S-adenosylmethioninamine biosynthesis; S-adenosylmethioninamine from S-adenosyl-L-methionine: step 1/1. The polypeptide is S-adenosylmethionine decarboxylase proenzyme (SAMDC) (Daucus carota (Wild carrot)).